The chain runs to 615 residues: Translation initiation factor IF-2 (615 aa).

Residues 118-285 (KRPPIVTVMG…AILTLAEINE (168 aa)) form the tr-type G domain. Residues 127 to 134 (GHVDHGKT) form a G1 region. Position 127-134 (127-134 (GHVDHGKT)) interacts with GTP. The tract at residues 152 to 156 (GITQH) is G2. The interval 173 to 176 (DTPG) is G3. GTP contacts are provided by residues 173–177 (DTPGH) and 227–230 (NKMD). The interval 227–230 (NKMD) is G4. A G5 region spans residues 263–265 (SAI).

The protein belongs to the TRAFAC class translation factor GTPase superfamily. Classic translation factor GTPase family. IF-2 subfamily.

It is found in the cytoplasm. In terms of biological role, one of the essential components for the initiation of protein synthesis. Protects formylmethionyl-tRNA from spontaneous hydrolysis and promotes its binding to the 30S ribosomal subunits. Also involved in the hydrolysis of GTP during the formation of the 70S ribosomal complex. This chain is Translation initiation factor IF-2, found in Mycoplasmoides gallisepticum (strain R(low / passage 15 / clone 2)) (Mycoplasma gallisepticum).